Here is a 237-residue protein sequence, read N- to C-terminus: MAPVDIPDRDRLIVALDLPDLRVAEAMVDRLGDSVGFYKIGYQLAYAGGLPLARALVGAGKKVFVDLKLHDIGNTVARGVESLSHLGASFLTVHAYPQTMKAAVEARGSSKVKILAVTVLTSYDDRDLADAGYRFGVRDLVEARARQAQAIGVDGLVCSPEEAAHLRSIVGPEMDLVTPGIRPAGAAAGDQKRIMTPAKAIAAGASYLVVGRPVLDAPDPKAAADAIVAEIAAARGS.

Substrate is bound by residues aspartate 17, lysine 39, aspartate 66 to threonine 75, threonine 121, arginine 182, glutamine 191, glycine 211, and arginine 212. Catalysis depends on lysine 68, which acts as the Proton donor.

It belongs to the OMP decarboxylase family. Type 1 subfamily. As to quaternary structure, homodimer.

The enzyme catalyses orotidine 5'-phosphate + H(+) = UMP + CO2. The protein operates within pyrimidine metabolism; UMP biosynthesis via de novo pathway; UMP from orotate: step 2/2. Its function is as follows. Catalyzes the decarboxylation of orotidine 5'-monophosphate (OMP) to uridine 5'-monophosphate (UMP). This Rhodopseudomonas palustris (strain ATCC BAA-98 / CGA009) protein is Orotidine 5'-phosphate decarboxylase.